Reading from the N-terminus, the 153-residue chain is Ribosome maturation factor RimP (153 aa).

It belongs to the RimP family.

The protein localises to the cytoplasm. In terms of biological role, required for maturation of 30S ribosomal subunits. The protein is Ribosome maturation factor RimP of Clostridium botulinum (strain Okra / Type B1).